A 342-amino-acid polypeptide reads, in one-letter code: Gibberellin cluster GA4 desaturase (342 aa).

Residues 127-183 (PELAPPYPMPGKSSSGSKEREAIPANELPTTRAKGFQKGEEEGPVRKPHKDWGPSGA) are disordered.

This sequence belongs to the asaB hydroxylase/desaturase family.

Its pathway is plant hormone biosynthesis; gibberellin biosynthesis. In terms of biological role, GA4 desaturase; part of the gene cluster that mediates the biosynthesis of gibberellins (GAs), diterpenoids that may provide a selective advantage during infection of the preferred host plant, rice. Gibberellins (GAs) are diterpenoids and are synthesized via the mevalonate pathway. Biosynthesis of the major metabolite GA3 (gibberellic acid) from geranylgeranyl diphosphate (GGPP) requires 13 steps. The GGPP produced by the geranylgeranyl diphosphate synthase GGS2 is converted to ent-kaurene via ent-copalyldiphosphate in a two-step cyclization reaction performed by the bifunctional ent-copalyl diphosphate synthase/ent-kaurene synthase enzyme (CPS/KS). Ent-Kaurene is metabolized to GAs by a series of oxidation reactions catalyzed by cytochrome P450 monooxygenases. Cytochrome P450 monooxygenase P450-4 is an ent-kaurene oxidase that catalyzes the three oxidation steps between ent-kaurene and ent-kaurenoic acid. The highly multifunctional cytochrome P450 monooxygenase P450-1 then catalyzes four steps involving oxidation at two carbon atoms, in the main pathway from ent-kaurenoic acid to GA14 via GA12-aldehyde as well as producing kaurenolides and fujenoic acids as by-products. The cytochrome P450 monooxygenase P450-2 then converts GA14 to GA4 by removal of C-20. GA4 is further converted to GA7 by the GA4 desaturase DES via 1,2-desaturation before cytochrome P450 monooxygenase P450-3, a 13-hydroxylase, hydroxylates GA7 to GA3, the final product of the GA-biosynthetic pathway. This Gibberella fujikuroi (strain CBS 195.34 / IMI 58289 / NRRL A-6831) (Bakanae and foot rot disease fungus) protein is Gibberellin cluster GA4 desaturase.